The sequence spans 979 residues: Glutamate receptor ionotropic, kainate 5 (979 aa).

The first 14 residues, 1-14 (MPAELLLLLIVAFA), serve as a signal peptide directing secretion. Over 15–544 (NPSCQVLSSL…YFSFLDPFSP (530 aa)) the chain is Extracellular. 3 disulfide bridges follow: cysteine 36/cysteine 292, cysteine 83/cysteine 334, and cysteine 165/cysteine 170. N-linked (GlcNAc...) asparagine glycosylation is found at asparagine 219, asparagine 271, asparagine 285, asparagine 322, asparagine 372, asparagine 394, asparagine 400, asparagine 407, asparagine 414, and asparagine 478. Residues 545–565 (AVWLFMLLAYLAVSCVLFLAA) form a helical membrane-spanning segment. Residues 566 to 622 (RLSPYEWYNPHPCLRARPHILENQYTLGNSLWFPVGGFMQQGSEIMPRALSTRCVSG) are Cytoplasmic-facing. A helical membrane pass occupies residues 623 to 643 (VWWAFTLIIISSYTANLAAFL). Residues 644-803 (TVQRMEVPVE…HRAKGLGMEN (160 aa)) lie on the Extracellular side of the membrane. Asparagine 735 is a glycosylation site (N-linked (GlcNAc...) asparagine). Residues 804-824 (IGGIFVVLICGLIIAVFVAVM) traverse the membrane as a helical segment. Over 825–979 (EFIWSTRRSA…TGPRELTEHE (155 aa)) the chain is Cytoplasmic. Over residues 856 to 867 (RKTSRSRRRRRP) the composition is skewed to basic residues. Disordered regions lie at residues 856 to 875 (RKTS…RALL), 890 to 925 (LYSA…APTP), and 942 to 979 (RASG…TEHE). Gly residues predominate over residues 894–903 (GAGGDAGAHG). Pro residues predominate over residues 912–923 (PGPPGGPRPQAP).

This sequence belongs to the glutamate-gated ion channel (TC 1.A.10.1) family. GRIK5 subfamily. Homotetramer. Heterotetramer with GRIK2. Can form functional heteromeric receptors with GRIK1, GRIK2 and GRIK3. Forms a heteromeric complex with GRIK2. As to expression, expressed in the hippocampal mossy fiber synapses (at protein level).

The protein localises to the cell membrane. It localises to the postsynaptic cell membrane. It is found in the presynaptic cell membrane. Its function is as follows. Ionotropic glutamate receptor that functions as a cation-permeable ligand-gated ion channel, gated by L-glutamate and the glutamatergic agonist kainic acid. Cannot form functional channels on its own and produces channel activity only in heteromeric assembly with GRIK2 subunit. Can form functional heteromeric receptors with GRIK1 and GRIK3. In Mus musculus (Mouse), this protein is Glutamate receptor ionotropic, kainate 5 (Grik5).